The following is a 396-amino-acid chain: MSFDLRTRLDARRAEHLYRQRPLLQSPQGPQVVVDGQPLLAFCNNDYMGLANHPEVIAAWQAGAERWGVGGGASHLVIGHSTPHHELEEALAELTGRPRALLFSNGYMANLGAVTALVGQGDTVLEDRLNHASLLDAGLLSGARFSRYLHNDVTSLASHLEKSVGDTLVVTDGVFSMDGDIADLPALAQAAKAKGAWLMVDDAHGFGPLGANGAGIVEHFGLSMEDVPVLVGTLGKSFGTSGAFVAGSEELIETLIQFARPYIYTTSQPPALACATLKSLQLLRTEHWRREHLASLIQQFRQGAEQIGLQLMDSFTPIQPILIGDAGRALRLSQLLRERGLLVTAIRPPTVPAGSARLRVTLSAAHSKADVQLLLEALEQCYPLLDASESTEPVHA.

Arginine 19 is a binding site for substrate. Pyridoxal 5'-phosphate is bound at residue 106-107 (GY). Histidine 131 serves as a coordination point for substrate. Pyridoxal 5'-phosphate contacts are provided by serine 176, histidine 204, and threonine 233. Lysine 236 carries the N6-(pyridoxal phosphate)lysine modification. Threonine 350 contacts substrate.

The protein belongs to the class-II pyridoxal-phosphate-dependent aminotransferase family. BioF subfamily. As to quaternary structure, homodimer. Pyridoxal 5'-phosphate is required as a cofactor.

It catalyses the reaction 6-carboxyhexanoyl-[ACP] + L-alanine + H(+) = (8S)-8-amino-7-oxononanoate + holo-[ACP] + CO2. Its pathway is cofactor biosynthesis; biotin biosynthesis. Functionally, catalyzes the decarboxylative condensation of pimeloyl-[acyl-carrier protein] and L-alanine to produce 8-amino-7-oxononanoate (AON), [acyl-carrier protein], and carbon dioxide. The polypeptide is 8-amino-7-oxononanoate synthase (Pseudomonas savastanoi pv. phaseolicola (strain 1448A / Race 6) (Pseudomonas syringae pv. phaseolicola (strain 1448A / Race 6))).